The primary structure comprises 130 residues: Small ribosomal subunit protein uS9 (130 aa).

Belongs to the universal ribosomal protein uS9 family.

In Aster yellows witches'-broom phytoplasma (strain AYWB), this protein is Small ribosomal subunit protein uS9.